Reading from the N-terminus, the 327-residue chain is MATTVPLFSQFTCKTPITSSSTSSFQSKSPILLPINPINRRIAVHRHDFKVRASDVNDEWGPDSKGRGGDVDDEWGPEIGLNSSVAEKVAEEAIESAEETERLKRVLAGSLYGTDRGLSASSETRAEISELITQLESKNPNPAPNEALFLLNGKWILVYTSFVGLFPLLSRRISPLVKVDEISQTIDSDSFTVHNSVRFASPLATTSLSTNAKFEVRSPKRVQVKFEQGVIGTPQLTDSIEIPEFVEVLGQKIDLNPIKGLLTSVQDTASSVARTISSQPPLKFSLPGDSAQSWLLTTYLDKDLRISRGDGGSVFVLIREGSSLLNP.

A chloroplast-targeting transit peptide spans 1-84; it reads MATTVPLFSQ…WGPEIGLNSS (84 aa). A disordered region spans residues 56 to 78; it reads VNDEWGPDSKGRGGDVDDEWGPE. The stretch at 85-107 forms a coiled coil; it reads VAEKVAEEAIESAEETERLKRVL.

It belongs to the PAP/fibrillin family. In terms of tissue distribution, expressed in anthers, sepals seeds, fruit coats, and leaves. Very low in petals and pistils and not detected in roots.

The protein localises to the plastid. The protein resides in the chloroplast. Functionally, may modulate the action of carotenoids. In Brassica campestris (Field mustard), this protein is Plastid lipid-associated protein 1, chloroplastic (PAP1).